Consider the following 357-residue polypeptide: UDP-N-acetylglucosamine--N-acetylmuramyl-(pentapeptide) pyrophosphoryl-undecaprenol N-acetylglucosamine transferase (357 aa).

R166, S196, and Q290 together coordinate UDP-N-acetyl-alpha-D-glucosamine.

It belongs to the glycosyltransferase 28 family. MurG subfamily.

The protein localises to the cell membrane. The catalysed reaction is Mur2Ac(oyl-L-Ala-gamma-D-Glu-L-Lys-D-Ala-D-Ala)-di-trans,octa-cis-undecaprenyl diphosphate + UDP-N-acetyl-alpha-D-glucosamine = beta-D-GlcNAc-(1-&gt;4)-Mur2Ac(oyl-L-Ala-gamma-D-Glu-L-Lys-D-Ala-D-Ala)-di-trans,octa-cis-undecaprenyl diphosphate + UDP + H(+). It participates in cell wall biogenesis; peptidoglycan biosynthesis. Cell wall formation. Catalyzes the transfer of a GlcNAc subunit on undecaprenyl-pyrophosphoryl-MurNAc-pentapeptide (lipid intermediate I) to form undecaprenyl-pyrophosphoryl-MurNAc-(pentapeptide)GlcNAc (lipid intermediate II). This Staphylococcus epidermidis (strain ATCC 35984 / DSM 28319 / BCRC 17069 / CCUG 31568 / BM 3577 / RP62A) protein is UDP-N-acetylglucosamine--N-acetylmuramyl-(pentapeptide) pyrophosphoryl-undecaprenol N-acetylglucosamine transferase.